The chain runs to 424 residues: Vasopressin V1b receptor (424 aa).

Residues 1-22 (MDSGPLWDANPTPRGTLSAPNA) are disordered. At 1-35 (MDSGPLWDANPTPRGTLSAPNATTPWLGRDEELAK) the chain is on the extracellular side. Over residues 13-22 (PRGTLSAPNA) the composition is skewed to polar residues. Asn21 is a glycosylation site (N-linked (GlcNAc...) asparagine). The helical transmembrane segment at 36 to 59 (VEIGVLATVLVLATGGNLAVLLTL) threads the bilayer. Over 60–71 (GQLGRKRSRMHL) the chain is Cytoplasmic. A helical transmembrane segment spans residues 72–93 (FVLHLALTDLAVALFQVLPQLL). At 94–108 (WDITYRFQGPDLLCR) the chain is on the extracellular side. A disulfide bridge connects residues Cys107 and Cys186. Residues 109–130 (AVKYLQVLSMFASTYMLLAMTL) form a helical membrane-spanning segment. Over 131–151 (DRYLAVCHPLRSLQQPGQSTY) the chain is Cytoplasmic. The helical transmembrane segment at 152–173 (LLIAAPWLLAAIFSLPQVFIFS) threads the bilayer. The Extracellular portion of the chain corresponds to 174-201 (LREVIQGSGVLDCWADFGFPWGPRAYLT). Residues 202 to 222 (WTTLAIFVLPVTMLTACYSLI) traverse the membrane as a helical segment. Over 223–283 (CHEICKNLKV…RAKIRTVKMT (61 aa)) the chain is Cytoplasmic. Residues 284 to 303 (FVIVLAYIACWAPFFSVQMW) traverse the membrane as a helical segment. Residues 304 to 321 (SVWDKNAPDEDSTNVAFT) are Extracellular-facing. The helical transmembrane segment at 322-341 (ISMLLGNLNSCCNPWIYMGF) threads the bilayer. Residues 342–424 (NSHLLPRPLR…GEGTAETIIF (83 aa)) lie on the Cytoplasmic side of the membrane. The disordered stretch occupies residues 398–417 (SGRPRPEESPRDLELADGEG). Residues 401–411 (PRPEESPRDLE) show a composition bias toward basic and acidic residues.

This sequence belongs to the G-protein coupled receptor 1 family. Vasopressin/oxytocin receptor subfamily.

The protein localises to the cell membrane. Functionally, receptor for arginine vasopressin. The activity of this receptor is mediated by G proteins which activate a phosphatidyl-inositol-calcium second messenger system. In terms of biological role, (Microbial infection) During SARS coronavirus-2/SARS-CoV-2 infection, may recognize and internalize the complex formed by AVP/Arg-vasopressin, SARS-CoV-2 spike protein and secreted ACE2 through DNM2/dynamin 2-dependent endocytosis. The sequence is that of Vasopressin V1b receptor from Homo sapiens (Human).